The primary structure comprises 92 residues: DNA-directed RNA polymerase subunit Rpo11 (92 aa).

It belongs to the archaeal Rpo11/eukaryotic RPB11/RPC19 RNA polymerase subunit family. As to quaternary structure, part of the 13-subunit RNA polymerase complex.

The protein resides in the cytoplasm. The enzyme catalyses RNA(n) + a ribonucleoside 5'-triphosphate = RNA(n+1) + diphosphate. DNA-dependent RNA polymerase (RNAP) catalyzes the transcription of DNA into RNA using the four ribonucleoside triphosphates as substrates. In Saccharolobus solfataricus (strain ATCC 35092 / DSM 1617 / JCM 11322 / P2) (Sulfolobus solfataricus), this protein is DNA-directed RNA polymerase subunit Rpo11.